The primary structure comprises 357 residues: UDP-N-acetylglucosamine--N-acetylmuramyl-(pentapeptide) pyrophosphoryl-undecaprenol N-acetylglucosamine transferase (357 aa).

UDP-N-acetyl-alpha-D-glucosamine-binding positions include 7 to 9 (TGG), Asn119, Arg159, Ser187, Ile241, and Gln286.

The protein belongs to the glycosyltransferase 28 family. MurG subfamily.

The protein localises to the cell inner membrane. The catalysed reaction is di-trans,octa-cis-undecaprenyl diphospho-N-acetyl-alpha-D-muramoyl-L-alanyl-D-glutamyl-meso-2,6-diaminopimeloyl-D-alanyl-D-alanine + UDP-N-acetyl-alpha-D-glucosamine = di-trans,octa-cis-undecaprenyl diphospho-[N-acetyl-alpha-D-glucosaminyl-(1-&gt;4)]-N-acetyl-alpha-D-muramoyl-L-alanyl-D-glutamyl-meso-2,6-diaminopimeloyl-D-alanyl-D-alanine + UDP + H(+). Its pathway is cell wall biogenesis; peptidoglycan biosynthesis. Cell wall formation. Catalyzes the transfer of a GlcNAc subunit on undecaprenyl-pyrophosphoryl-MurNAc-pentapeptide (lipid intermediate I) to form undecaprenyl-pyrophosphoryl-MurNAc-(pentapeptide)GlcNAc (lipid intermediate II). This is UDP-N-acetylglucosamine--N-acetylmuramyl-(pentapeptide) pyrophosphoryl-undecaprenol N-acetylglucosamine transferase from Nitrosomonas europaea (strain ATCC 19718 / CIP 103999 / KCTC 2705 / NBRC 14298).